The following is a 96-amino-acid chain: (4S)-4-hydroxy-5-phosphonooxypentane-2,3-dione isomerase (96 aa).

Positions 2–91 (HVTLVEINVH…MTGPRKKRLF (90 aa)) constitute an ABM domain.

This sequence belongs to the LsrG family. Homodimer.

It is found in the cytoplasm. The catalysed reaction is (2S)-2-hydroxy-3,4-dioxopentyl phosphate = 3-hydroxy-2,4-dioxopentyl phosphate. Functionally, involved in the degradation of phospho-AI-2, thereby terminating induction of the lsr operon and closing the AI-2 signaling cycle. Catalyzes the conversion of (4S)-4-hydroxy-5-phosphonooxypentane-2,3-dione (P-DPD) to 3-hydroxy-5-phosphonooxypentane-2,4-dione (P-HPD). The chain is (4S)-4-hydroxy-5-phosphonooxypentane-2,3-dione isomerase from Shigella flexneri serotype 5b (strain 8401).